The primary structure comprises 401 residues: MDLTQQAKDIQNVTVEETNKNNSESIECSKITMDLKFNNSRKYISITVPSKTQTMSPHIKSIDDIVVLGMNLSKFNKLTQFFICVAGVFVFYLIYGYLQELIFSVEGFKSYGWYLTLVQFAFYSIFGLIELQPIQDKRRRIPGKTYMIIAFLTVGTMGLSNTSLGYLNYPTQVIFKCCKLIPVMLGGVFIQGKRYNVADVSAAICMSLGLIWFTLADSTIAPNFNLTGVVLISLALCADAVIGNVQEKAMKLHNASNSEMVLYSYSIGFVYILLGLTCTSGLGPAVTFCAKNPVRTYGYAFLFSLTGYFGISFVLALIKIFGALIAVTVTTGRKAMTIVLSFIFFAKPFTFQYVWSGLLVFLGIFLNVYSKNMDKIRLPSLYDLINKSVEARKSRTLAQTV.

Asn-12 and Asn-71 each carry an N-linked (GlcNAc...) asparagine glycan. 6 consecutive transmembrane segments (helical) span residues 78–98 (LTQF…YGYL), 111–131 (YGWY…LIEL), 147–167 (MIIA…LGYL), 170–190 (PTQV…GVFI), 200–220 (VSAA…DSTI), and 223–243 (NFNL…AVIG). The N-linked (GlcNAc...) asparagine glycan is linked to Asn-254. Transmembrane regions (helical) follow at residues 267–287 (IGFV…PAVT), 298–317 (GYAF…VLAL), 324–346 (LIAV…IFFA), and 349–369 (FTFQ…LNVY).

This sequence belongs to the nucleotide-sugar transporter family. SLC35B subfamily.

It localises to the golgi apparatus membrane. It carries out the reaction 3'-phosphoadenylyl sulfate(in) + adenosine 3',5'-bisphosphate(out) = 3'-phosphoadenylyl sulfate(out) + adenosine 3',5'-bisphosphate(in). In terms of biological role, probably functions as a 3'-phosphoadenylyl sulfate:adenosine 3',5'-bisphosphate antiporter at the Golgi membranes. Mediates the transport from the cytosol into the lumen of the Golgi of 3'-phosphoadenylyl sulfate/adenosine 3'-phospho 5'-phosphosulfate (PAPS), a universal sulfuryl donor for sulfation events that take place in that compartment. The polypeptide is Adenosine 3'-phospho 5'-phosphosulfate transporter 2 (Pongo abelii (Sumatran orangutan)).